Reading from the N-terminus, the 592-residue chain is Methionine--tRNA ligase (592 aa).

Positions 12-22 (PYANGPFHVGH) match the 'HIGH' region motif. Residues C144, C147, C157, and C160 each contribute to the Zn(2+) site. A 'KMSKS' region motif is present at residues 342–346 (KMSTS). ATP is bound at residue T345.

It belongs to the class-I aminoacyl-tRNA synthetase family. MetG type 1 subfamily. As to quaternary structure, monomer. The cofactor is Zn(2+).

The protein resides in the cytoplasm. It catalyses the reaction tRNA(Met) + L-methionine + ATP = L-methionyl-tRNA(Met) + AMP + diphosphate. Functionally, is required not only for elongation of protein synthesis but also for the initiation of all mRNA translation through initiator tRNA(fMet) aminoacylation. This Roseiflexus castenholzii (strain DSM 13941 / HLO8) protein is Methionine--tRNA ligase.